Reading from the N-terminus, the 103-residue chain is MANQKIRIRLKAFDYRLIDQSAQEIVETAKRTGAVVRGPVPLPTRKQRFDILRSPHVNKASRDQLEIRTHLRLMDIVDPTDKTVDALMKLDLPAGVDVEIKLQ.

This sequence belongs to the universal ribosomal protein uS10 family. In terms of assembly, part of the 30S ribosomal subunit.

Its function is as follows. Involved in the binding of tRNA to the ribosomes. In Dechloromonas aromatica (strain RCB), this protein is Small ribosomal subunit protein uS10.